Reading from the N-terminus, the 1388-residue chain is CRISPR-associated endonuclease Cas9 2 (1388 aa).

Aspartate 10 (for RuvC-like nuclease domain) is an active-site residue. 3 residues coordinate Mg(2+): aspartate 10, glutamate 763, and glutamate 767. The HNH Cas9-type domain occupies 771–928; it reads TNQGKSNSQQ…DKAGFIQRQL (158 aa). Histidine 847 acts as the Proton acceptor for HNH nuclease domain in catalysis. Histidine 990 lines the Mg(2+) pocket. Residues 1100-1109 are compositionally biased toward basic and acidic residues; the sequence is EQNHGLDRGK. Residues 1100–1130 form a disordered region; it reads EQNHGLDRGKPKGLFNANLSSKPKPNSNENL. The PAM-interacting domain (PI) stretch occupies residues 1102–1388; that stretch reads NHGLDRGKPK…RIDLAKLGEG (287 aa). A compositionally biased stretch (polar residues) spans 1116–1129; the sequence is ANLSSKPKPNSNEN.

This sequence belongs to the CRISPR-associated protein Cas9 family. Subtype II-A subfamily. As to quaternary structure, monomer. Binds crRNA and tracrRNA. Mg(2+) serves as cofactor.

CRISPR (clustered regularly interspaced short palindromic repeat) is an adaptive immune system that provides protection against mobile genetic elements (viruses, transposable elements and conjugative plasmids). CRISPR clusters contain spacers, sequences complementary to antecedent mobile elements, and target invading nucleic acids. CRISPR clusters are transcribed and processed into CRISPR RNA (crRNA). In type II CRISPR systems correct processing of pre-crRNA requires a trans-encoded small RNA (tracrRNA), endogenous ribonuclease 3 (rnc) and this protein. The tracrRNA serves as a guide for ribonuclease 3-aided processing of pre-crRNA. Subsequently Cas9/crRNA/tracrRNA endonucleolytically cleaves linear or circular dsDNA target complementary to the spacer yielding blunt ends; Cas9 is inactive in the absence of the 2 guide RNAs (gRNA). Cas9 recognizes a 3'-G-rich protospacer adjacent motif (PAM, GGG in this organism) in the CRISPR repeat sequences to help distinguish self versus nonself, as targets within the bacterial CRISPR locus do not have PAMs. PAM recognition is also required for catalytic activity. Complements the gRNA coprocessing defect in a cas9 deletion in S.pyogenes strain 370, and cuts target DNA in Cas9:gRNAs mixing experiments with S.mutans strain UA159. The protein is CRISPR-associated endonuclease Cas9 2 of Streptococcus thermophilus (strain ATCC BAA-491 / LMD-9).